The following is a 605-amino-acid chain: Elongation factor 4 (605 aa).

In terms of domain architecture, tr-type G spans 10–192 (KNIRNFAIVA…AIVMRLPPPH (183 aa)). Residues 22 to 27 (DHGKST) and 139 to 142 (NKVD) each bind GTP.

This sequence belongs to the TRAFAC class translation factor GTPase superfamily. Classic translation factor GTPase family. LepA subfamily.

Its subcellular location is the cell inner membrane. It carries out the reaction GTP + H2O = GDP + phosphate + H(+). Functionally, required for accurate and efficient protein synthesis under certain stress conditions. May act as a fidelity factor of the translation reaction, by catalyzing a one-codon backward translocation of tRNAs on improperly translocated ribosomes. Back-translocation proceeds from a post-translocation (POST) complex to a pre-translocation (PRE) complex, thus giving elongation factor G a second chance to translocate the tRNAs correctly. Binds to ribosomes in a GTP-dependent manner. The chain is Elongation factor 4 from Chelativorans sp. (strain BNC1).